Here is a 146-residue protein sequence, read N- to C-terminus: Prefoldin subunit alpha 1 (146 aa).

It belongs to the prefoldin subunit alpha family. In terms of assembly, heterohexamer of two alpha and four beta subunits.

The protein localises to the cytoplasm. Its function is as follows. Molecular chaperone capable of stabilizing a range of proteins. Seems to fulfill an ATP-independent, HSP70-like function in archaeal de novo protein folding. The chain is Prefoldin subunit alpha 1 from Thermococcus kodakarensis (strain ATCC BAA-918 / JCM 12380 / KOD1) (Pyrococcus kodakaraensis (strain KOD1)).